A 79-amino-acid polypeptide reads, in one-letter code: Large ribosomal subunit protein uL24 (79 aa).

This sequence belongs to the universal ribosomal protein uL24 family. Part of the 50S ribosomal subunit.

One of two assembly initiator proteins, it binds directly to the 5'-end of the 23S rRNA, where it nucleates assembly of the 50S subunit. Its function is as follows. One of the proteins that surrounds the polypeptide exit tunnel on the outside of the subunit. The protein is Large ribosomal subunit protein uL24 of Lactobacillus delbrueckii subsp. bulgaricus (strain ATCC BAA-365 / Lb-18).